Consider the following 192-residue polypeptide: Ribosome hibernation promotion factor (192 aa).

The interval 95–129 is disordered; that stretch reads RVNRKHKTHGEPEAFVAEVQEAPPENVDDVNAEPT. A compositionally biased stretch (acidic residues) spans 120–129; the sequence is NVDDVNAEPT.

It belongs to the HPF/YfiA ribosome-associated protein family. Long HPF subfamily. In terms of assembly, interacts with 100S ribosomes.

The protein localises to the cytoplasm. Its function is as follows. Required for dimerization of active 70S ribosomes into 100S ribosomes in stationary phase; 100S ribosomes are translationally inactive and sometimes present during exponential growth. This Staphylococcus haemolyticus (strain JCSC1435) protein is Ribosome hibernation promotion factor.